The chain runs to 329 residues: 4-hydroxy-3-methylbut-2-enyl diphosphate reductase 1 (329 aa).

Cys-29 contributes to the [4Fe-4S] cluster binding site. The (2E)-4-hydroxy-3-methylbut-2-enyl diphosphate site is built by His-58 and His-95. Dimethylallyl diphosphate-binding residues include His-58 and His-95. Isopentenyl diphosphate contacts are provided by His-58 and His-95. Cys-117 is a [4Fe-4S] cluster binding site. His-145 is a (2E)-4-hydroxy-3-methylbut-2-enyl diphosphate binding site. His-145 provides a ligand contact to dimethylallyl diphosphate. His-145 lines the isopentenyl diphosphate pocket. The active-site Proton donor is the Glu-147. Thr-185 is a binding site for (2E)-4-hydroxy-3-methylbut-2-enyl diphosphate. A [4Fe-4S] cluster-binding site is contributed by Cys-215. Residues Ser-243, Ser-244, Asn-245, and Ser-287 each coordinate (2E)-4-hydroxy-3-methylbut-2-enyl diphosphate. The dimethylallyl diphosphate site is built by Ser-243, Ser-244, Asn-245, and Ser-287. 4 residues coordinate isopentenyl diphosphate: Ser-243, Ser-244, Asn-245, and Ser-287.

The protein belongs to the IspH family. [4Fe-4S] cluster is required as a cofactor.

It carries out the reaction isopentenyl diphosphate + 2 oxidized [2Fe-2S]-[ferredoxin] + H2O = (2E)-4-hydroxy-3-methylbut-2-enyl diphosphate + 2 reduced [2Fe-2S]-[ferredoxin] + 2 H(+). It catalyses the reaction dimethylallyl diphosphate + 2 oxidized [2Fe-2S]-[ferredoxin] + H2O = (2E)-4-hydroxy-3-methylbut-2-enyl diphosphate + 2 reduced [2Fe-2S]-[ferredoxin] + 2 H(+). It participates in isoprenoid biosynthesis; dimethylallyl diphosphate biosynthesis; dimethylallyl diphosphate from (2E)-4-hydroxy-3-methylbutenyl diphosphate: step 1/1. Its pathway is isoprenoid biosynthesis; isopentenyl diphosphate biosynthesis via DXP pathway; isopentenyl diphosphate from 1-deoxy-D-xylulose 5-phosphate: step 6/6. In terms of biological role, catalyzes the conversion of 1-hydroxy-2-methyl-2-(E)-butenyl 4-diphosphate (HMBPP) into a mixture of isopentenyl diphosphate (IPP) and dimethylallyl diphosphate (DMAPP). Acts in the terminal step of the DOXP/MEP pathway for isoprenoid precursor biosynthesis. This is 4-hydroxy-3-methylbut-2-enyl diphosphate reductase 1 from Mycobacterium tuberculosis (strain CDC 1551 / Oshkosh).